Here is a 146-residue protein sequence, read N- to C-terminus: MTTRFKKNRKKRGHVSAGHGRIGKHRKHPGGRGNAGGMHHHRILFDKYHPGYFGKVGMRYFHKLRNKFFCPIVNLDKLWSLVPEDVKAKSTKDNVPLIDVTQHGFFKVLGKGHLPENKPFVVKAKLISKTAEKKIKEAGGAVVLTA.

Composition is skewed to basic residues over residues 1–14 (MTTRFKKNRKKRGH) and 21–30 (RIGKHRKHPG). The interval 1 to 35 (MTTRFKKNRKKRGHVSAGHGRIGKHRKHPGGRGNA) is disordered.

This sequence belongs to the universal ribosomal protein uL15 family.

The chain is Large ribosomal subunit protein uL15x (RPL27AC) from Arabidopsis thaliana (Mouse-ear cress).